A 285-amino-acid chain; its full sequence is UPF0014 membrane protein STAR2 (285 aa).

7 helical membrane passes run 30–50 (FLVGMLKPVAATAVVAMAVAL), 64–84 (YAMARAFLQLSVIGFVLQFIF), 88–108 (SAAWILLAYLFMVTVAGYTAG), 119–139 (HIAAVSILAGTSVTMALLVAL), 148–168 (YIIPVAGMMVGNAMTVTGVTM), 203–225 (SLVIALSPVIDNAKTVGLIALPG), and 240–262 (AIQLQIVVMNMLMGASTVSSILS).

The protein belongs to the UPF0014 family. In terms of assembly, interacts with STAR2. In terms of tissue distribution, expressed in roots.

The protein localises to the membrane. Associates with STAR2 to form a functional transmembrane ABC transporter required for detoxification of aluminum (Al) in roots. Can specifically transport UDP-glucose. This Oryza sativa subsp. japonica (Rice) protein is UPF0014 membrane protein STAR2.